The chain runs to 234 residues: tRNA1(Val) (adenine(37)-N6)-methyltransferase (234 aa).

Belongs to the methyltransferase superfamily. tRNA (adenine-N(6)-)-methyltransferase family.

Its subcellular location is the cytoplasm. It catalyses the reaction adenosine(37) in tRNA1(Val) + S-adenosyl-L-methionine = N(6)-methyladenosine(37) in tRNA1(Val) + S-adenosyl-L-homocysteine + H(+). Functionally, specifically methylates the adenine in position 37 of tRNA(1)(Val) (anticodon cmo5UAC). This chain is tRNA1(Val) (adenine(37)-N6)-methyltransferase, found in Flavobacterium psychrophilum (strain ATCC 49511 / DSM 21280 / CIP 103535 / JIP02/86).